The following is a 629-amino-acid chain: EF-hand calcium-binding domain-containing protein 7 (629 aa).

The interval 1–25 (MAISPRSDATFSSQKSTPSESPRTK) is disordered. Positions 7–21 (SDATFSSQKSTPSES) are enriched in polar residues. 2 EF-hand domains span residues 102-137 (TSKA…RGEK) and 138-173 (MTRE…TNEQ). Residues 195 to 229 (NHIEGSPERDPSPVPKPSPKITRKTDPETFLNKGD) form a disordered region. Phosphoserine is present on residues serine 200 and serine 212. Residues 403–438 (EFKSTLSDIFEVIDLDGNGLLSLEEYNFFELRTSGE) enclose the EF-hand 3 domain. Residues aspartate 416, aspartate 418, asparagine 420, and glutamate 427 each contribute to the Ca(2+) site.

As to quaternary structure, component of the EvC complex composed of EFCAB7, IQCE, EVC2 and EVC; built from two subcomplexes, EVC2:EVC and EFCAB7:IQCE. Interacts (via EF-hand 1 and 2) with IQCE (via N-terminus); this interaction anchors the EVC-EVC2 complex in a signaling microdomain at the base of cilia and stimulates the Hedgehog (Hh) pathway. Interacts with EVC2 (via N-terminal end). Interacts with EVC.

The protein resides in the cell projection. It is found in the cilium membrane. In terms of biological role, component of the EvC complex that positively regulates ciliary Hedgehog (Hh) signaling. Required for the localization of the EVC2:EVC subcomplex at the base of primary cilia. This is EF-hand calcium-binding domain-containing protein 7 (EFCAB7) from Homo sapiens (Human).